The sequence spans 82 residues: Conotoxin Cal30 (82 aa).

Residues 1-19 (MEKLIILLLVASLLVTTDS) form the signal peptide.

Post-translationally, may contain 5 disulfide bonds. As to expression, expressed by the venom duct.

Its subcellular location is the secreted. In terms of biological role, probable neurotoxin. This Californiconus californicus (California cone) protein is Conotoxin Cal30.